A 385-amino-acid polypeptide reads, in one-letter code: Alkanesulfonate monooxygenase 2 (385 aa).

Belongs to the SsuD family.

It carries out the reaction an alkanesulfonate + FMNH2 + O2 = an aldehyde + FMN + sulfite + H2O + 2 H(+). In terms of biological role, catalyzes the desulfonation of aliphatic sulfonates. The sequence is that of Alkanesulfonate monooxygenase 2 (ssuD2) from Mesorhizobium japonicum (strain LMG 29417 / CECT 9101 / MAFF 303099) (Mesorhizobium loti (strain MAFF 303099)).